Reading from the N-terminus, the 2162-residue chain is Calpain-type cysteine protease ADL1 (2162 aa).

Residues 1 to 33 form the signal peptide; sequence MEEEEHRGVVLVCSICGFLFAVLGPLSFWILWA. The Extracellular portion of the chain corresponds to 34–70; sequence VNWRPWRLYSWIYARKWPAYVQGPQLSTLCSFFTLFA. A helical membrane pass occupies residues 71-91; that stretch reads WLVVVSPITVLLVWGGILIAL. Topologically, residues 92–95 are cytoplasmic; the sequence is LERN. Residues 96 to 116 form a helical membrane-spanning segment; sequence IIGLAVIMVGVALLLSFYSIM. Topologically, residues 117–127 are extracellular; it reads LWWRTQWQSSK. Residues 128–148 form a helical membrane-spanning segment; that stretch reads AVAYLLLLAVGLLCAYEFCAV. At 149-164 the chain is on the cytoplasmic side; sequence YVTTGASASELNSPSG. The chain crosses the membrane as a helical span at residues 165–185; that stretch reads FFFGVSAISLAINMLFISKIL. The Extracellular portion of the chain corresponds to 186 to 236; that stretch reads FNGSGFDVDEYVRRLYKFAYSDCVEVAPVSCSPDPPDPSELYMTKSSRVLH. The chain crosses the membrane as a helical span at residues 237–257; that stretch reads LGLLYLCSLMVLVVYSILYGL. Topologically, residues 258–264 are cytoplasmic; the sequence is TSKEARW. The chain crosses the membrane as a helical span at residues 265–285; the sequence is LGALTSVAVVILDWNLGLCSF. At 286–294 the chain is on the extracellular side; the sequence is RFELLKSRM. A helical membrane pass occupies residues 295 to 315; that stretch reads IALFVAGTSRVFLICFGVHYW. Over 316–320 the chain is Cytoplasmic; that stretch reads YLGHC. Residues 321-341 form a helical membrane-spanning segment; that stretch reads ISYAFVASVLLAAAVSCWLSI. At 342–626 the chain is on the extracellular side; sequence SNPSVARIDA…LMFHQVAGSP (285 aa). Positions 366–403 are disordered; that stretch reads KGQTSSSNSSDGCGSSVKRSSGSVEAGPHGNATDSMYR. Positions 370 to 381 are enriched in low complexity; sequence SSSNSSDGCGSS. A helical membrane pass occupies residues 627 to 647; the sequence is IRAFVVFTLIFIIETVTVAVH. At 648 to 663 the chain is on the cytoplasmic side; that stretch reads RPKPIKVINATHEQFE. The helical transmembrane segment at 664–684 threads the bilayer; it reads FGFSILLLSPVVCSIMAFIWS. Residues 685 to 697 lie on the Extracellular side of the membrane; that stretch reads LCAEEMTMTSKPR. The helical transmembrane segment at 698-718 threads the bilayer; the sequence is KYGFIAWLLSTCVGLLLSFLS. Residues 719–722 are Cytoplasmic-facing; sequence KSSV. Residues 723-743 traverse the membrane as a helical segment; it reads ILGLSLTVPLMVACLSFAIPI. Over 744–773 the chain is Extracellular; the sequence is WMRNGYRFWIPGGELDSRENIRQAPGKKER. The helical transmembrane segment at 774 to 794 threads the bilayer; sequence ALFAISITVFTASVIGLGAIV. The Cytoplasmic segment spans residues 795–825; it reads SAKPLDALGYKGWDADKKSFYSPYATSMYLG. The helical transmembrane segment at 826-846 threads the bilayer; that stretch reads WALSSTIAVLATGVIPIVAWF. Residues 847 to 856 are Extracellular-facing; that stretch reads ATYRFSPSSA. The helical transmembrane segment at 857-877 threads the bilayer; it reads ICVGLFATVLVSFCGVSYWGV. At 878 to 890 the chain is on the cytoplasmic side; that stretch reads VNSRQDGVPLKAD. Residues 891–911 traverse the membrane as a helical segment; that stretch reads FLAALLPLLCIPAVFSLFTGM. Over 912–924 the chain is Extracellular; that stretch reads YKWKDDDWKISRG. A helical membrane pass occupies residues 925–945; sequence VYLFVGMGVLLLLGAISAVIV. Residues 946 to 949 lie on the Cytoplasmic side of the membrane; the sequence is TIRP. The helical transmembrane segment at 950 to 970 threads the bilayer; it reads WTVGVACLLVILFLVFAIGVI. Over 971-984 the chain is Extracellular; it reads HYWTSNNFYLTRTQ. Residues 985-1005 traverse the membrane as a helical segment; sequence MLLVCSLAFLLALAAFLMGLF. The Cytoplasmic segment spans residues 1006–1019; the sequence is QEKPFVGASIGYFS. Residues 1020–1040 form a helical membrane-spanning segment; it reads FLFLLTGRALTVLLSPPIVVY. Over 1041–1063 the chain is Extracellular; sequence SPRVLPVYVYDAHADSAKNVSYA. Residues 1064–1084 traverse the membrane as a helical segment; it reads FLILYGIALATEVWGVIASLI. Residues 1085 to 2162 are Cytoplasmic-facing; that stretch reads LNPPFIGAAI…TKAPIKLEAV (1078 aa). Phosphoserine is present on residues serine 1372 and serine 1377. One can recognise a Calpain catalytic 1 domain in the interval 1418-1611; sequence TGRHCGEIDL…ICSAEYGLFD (194 aa). Serine 1668 is subject to Phosphoserine. Residues 1706 to 2008 enclose the Calpain catalytic 2 domain; sequence NFTDQEFPPD…FRSIYVCRVY (303 aa). Catalysis depends on residues cysteine 1772, histidine 1930, and asparagine 1950.

Belongs to the peptidase C2 family. Autocatalytic proteolytic cleavage leading to the production of mainly cytoplasmic localized subproducts of about 85 and 120 kDa. Ubiquitously expressed with higher levels in embryos, vasculatures, leaf primordia, leaf margins, and shoot apical meristem (SAM).

It localises to the endoplasmic reticulum membrane. Its subcellular location is the cytoplasm. It is found in the cell membrane. The protein resides in the endosome membrane. Its function is as follows. Essential protease involved in epiderm development. Required for aleurone cell development in the endosperm probably by maintaining and restricting the aleurone and embryonic epidermal L1 cell-layer fates as well as meristems organization. Involved in the maintenance of adaxial/abaxial axis information in developing leaves, probably by regulating cell proliferation and expansion. Does not need calcium ions to be active. This chain is Calpain-type cysteine protease ADL1 (ADL1), found in Oryza sativa subsp. japonica (Rice).